Reading from the N-terminus, the 345-residue chain is Histidinol-phosphate aminotransferase (345 aa).

An N6-(pyridoxal phosphate)lysine modification is found at lysine 206.

Belongs to the class-II pyridoxal-phosphate-dependent aminotransferase family. Histidinol-phosphate aminotransferase subfamily. Homodimer. Requires pyridoxal 5'-phosphate as cofactor.

It catalyses the reaction L-histidinol phosphate + 2-oxoglutarate = 3-(imidazol-4-yl)-2-oxopropyl phosphate + L-glutamate. It participates in amino-acid biosynthesis; L-histidine biosynthesis; L-histidine from 5-phospho-alpha-D-ribose 1-diphosphate: step 7/9. This chain is Histidinol-phosphate aminotransferase, found in Bacteroides fragilis (strain YCH46).